A 411-amino-acid chain; its full sequence is Peptidase T (411 aa).

His78 lines the Zn(2+) pocket. Residue Asp80 is part of the active site. Asp140 lines the Zn(2+) pocket. The active-site Proton acceptor is Glu173. Glu174, Asp196, and His379 together coordinate Zn(2+).

Belongs to the peptidase M20B family. Zn(2+) serves as cofactor.

The protein localises to the cytoplasm. The enzyme catalyses Release of the N-terminal residue from a tripeptide.. Its function is as follows. Cleaves the N-terminal amino acid of tripeptides. This Yersinia pseudotuberculosis serotype O:3 (strain YPIII) protein is Peptidase T.